A 279-amino-acid chain; its full sequence is Urease accessory protein UreD (279 aa).

It belongs to the UreD family. UreD, UreF and UreG form a complex that acts as a GTP-hydrolysis-dependent molecular chaperone, activating the urease apoprotein by helping to assemble the nickel containing metallocenter of UreC. The UreE protein probably delivers the nickel.

The protein resides in the cytoplasm. Functionally, required for maturation of urease via the functional incorporation of the urease nickel metallocenter. This is Urease accessory protein UreD from Trichodesmium erythraeum (strain IMS101).